An 803-amino-acid chain; its full sequence is Exo-1,4-beta-xylosidase xlnD (803 aa).

The signal sequence occupies residues 1 to 18 (MRSLISVAVLSALPTAFS). 6 N-linked (GlcNAc...) asparagine glycosylation sites follow: Asn-21, Asn-44, Asn-85, Asn-122, Asn-140, and Asn-234. Residue Asp-307 is part of the active site. N-linked (GlcNAc...) asparagine glycosylation is found at Asn-437, Asn-474, Asn-515, Asn-611, Asn-676, and Asn-698.

The protein belongs to the glycosyl hydrolase 3 family.

It is found in the secreted. It catalyses the reaction Hydrolysis of (1-&gt;4)-beta-D-xylans, to remove successive D-xylose residues from the non-reducing termini.. The protein operates within glycan degradation; xylan degradation. In terms of biological role, xylan 1,4-beta-xylosidase involved in the hydrolysis of xylan, a major structural heterogeneous polysaccharide found in plant biomass representing the second most abundant polysaccharide in the biosphere, after cellulose. The chain is Exo-1,4-beta-xylosidase xlnD (xlnD) from Emericella nidulans (strain FGSC A4 / ATCC 38163 / CBS 112.46 / NRRL 194 / M139) (Aspergillus nidulans).